The primary structure comprises 365 residues: Probable G-protein coupled receptor 142 (365 aa).

Residues 1-66 are Extracellular-facing; the sequence is MHLNSNPNSY…WPESPERSPC (66 aa). Asn-44 is a glycosylation site (N-linked (GlcNAc...) asparagine). The chain crosses the membrane as a helical span at residues 67 to 87; that stretch reads VAGIIPVIYYSVLLSLGLPVA. Residues 88 to 102 are Cytoplasmic-facing; the sequence is LARLAARTRKPSYHY. A helical membrane pass occupies residues 103-123; it reads LLALTASDIVTQVIIVFVGFL. Topologically, residues 124–140 are extracellular; it reads LQGAVLARQVPQAVVRT. Residues 141 to 161 form a helical membrane-spanning segment; the sequence is ANILEFAANHASVWIAVLFTV. The Cytoplasmic segment spans residues 162-185; that stretch reads DRYNALCRPLRHRATSSPGRTHRA. A helical transmembrane segment spans residues 186–206; that stretch reads IAAVIGVTLLTGIPFYWWLDV. Over 207–224 the chain is Extracellular; the sequence is WRDADPPSTMDKLLKWAH. The chain crosses the membrane as a helical span at residues 225 to 245; the sequence is CLIVYFIPCNVFLVTNSAIIL. Over 246–264 the chain is Cytoplasmic; it reads RLRKRGQRGLRPLVSKSTA. The helical transmembrane segment at 265 to 285 threads the bilayer; that stretch reads ILLGVTSLFALLWAPRIIVML. Residues 286-304 lie on the Extracellular side of the membrane; sequence YHLYVAPVHRDWRVHLALD. A helical transmembrane segment spans residues 305-325; the sequence is IANMLAMLNTEVNFGLYCFIS. The Cytoplasmic segment spans residues 326–365; sequence KTFRATVRQVICDVHMACALKSQPKQTVVELMLKSVGTEL.

This sequence belongs to the G-protein coupled receptor 1 family.

It localises to the cell membrane. In terms of biological role, orphan receptor. In Mus musculus (Mouse), this protein is Probable G-protein coupled receptor 142 (Gpr142).